The sequence spans 418 residues: Arginine deiminase (418 aa).

C406 serves as the catalytic Amidino-cysteine intermediate.

Belongs to the arginine deiminase family.

The protein localises to the cytoplasm. It catalyses the reaction L-arginine + H2O = L-citrulline + NH4(+). It participates in amino-acid degradation; L-arginine degradation via ADI pathway; carbamoyl phosphate from L-arginine: step 1/2. The polypeptide is Arginine deiminase (Lentilactobacillus hilgardii (Lactobacillus hilgardii)).